Consider the following 441-residue polypeptide: Baicalein 7-O-glucuronosyltransferase (441 aa).

Belongs to the UDP-glycosyltransferase family. As to quaternary structure, homodimer.

It carries out the reaction baicalein + UDP-alpha-D-glucuronate = baicalin + UDP. Its activity is regulated as follows. Inhibited by copper, zinc and iron, p-Chloromercuri-benzoic acid (PCMBA) and 4,4'-diisothiocyanostilbene-2,2'-disulfonic acid (DIDS), but not by N-ethylmaleimide (NEM), dithioerythritol (DTE), calcium or magnesium. Involved in the production of glucuronosylated baicalein, a flavonoid that shows antiallergic, anti-HIV and antitumor activities. Can use baicalein, scutellarein and wogonin as substrates, but not chrysin, apigenin, luteolin, quercetin, formononetin and daidzein. Highly specific for UDP-glucuronate (UDP-GlcUA) and no activity with UDP-glucose or UDP-galacturonic acid. The protein is Baicalein 7-O-glucuronosyltransferase (UBGAT-I) of Scutellaria baicalensis (Baical skullcap).